Here is a 206-residue protein sequence, read N- to C-terminus: Oligoribonuclease (206 aa).

An Exonuclease domain is found at 20 to 183 (LVWLDMEMTG…ADIHESIDEL (164 aa)). Residue Tyr141 is part of the active site.

It belongs to the oligoribonuclease family.

The protein resides in the cytoplasm. Its function is as follows. 3'-to-5' exoribonuclease specific for small oligoribonucleotides. The polypeptide is Oligoribonuclease (Burkholderia cenocepacia (strain HI2424)).